The primary structure comprises 180 residues: Large ribosomal subunit protein uL5 (180 aa).

This sequence belongs to the universal ribosomal protein uL5 family. In terms of assembly, part of the 50S ribosomal subunit; part of the 5S rRNA/L5/L18/L25 subcomplex. Contacts the 5S rRNA and the P site tRNA. Forms a bridge to the 30S subunit in the 70S ribosome.

This is one of the proteins that bind and probably mediate the attachment of the 5S RNA into the large ribosomal subunit, where it forms part of the central protuberance. In the 70S ribosome it contacts protein S13 of the 30S subunit (bridge B1b), connecting the 2 subunits; this bridge is implicated in subunit movement. Contacts the P site tRNA; the 5S rRNA and some of its associated proteins might help stabilize positioning of ribosome-bound tRNAs. The sequence is that of Large ribosomal subunit protein uL5 from Moorella thermoacetica (strain ATCC 39073 / JCM 9320).